Here is a 130-residue protein sequence, read N- to C-terminus: uncharacterized protein (130 aa).

Residues 1–26 form the signal peptide; it reads MKFIYKLLFILSIVLFLFNNIITING. The N-linked (GlcNAc...) asparagine glycan is linked to N88.

It is found in the secreted. This is an uncharacterized protein from Dictyostelium discoideum (Social amoeba).